Reading from the N-terminus, the 444-residue chain is DNA primase DnaG (444 aa).

Positions 173 to 250 (DAILIVEGRS…YVTRAPRGLE (78 aa)) constitute a Toprim domain. The Mg(2+) site is built by Glu179, Asp221, and Asp223. Residues 302–354 (VTSSVNKTDKYSQKNESKQFKQQKNENKQVKDNSKEKTQKSTEKHNETEETHL) form a disordered region. Residues 308-354 (KTDKYSQKNESKQFKQQKNENKQVKDNSKEKTQKSTEKHNETEETHL) show a composition bias toward basic and acidic residues.

The protein belongs to the archaeal DnaG primase family. As to quaternary structure, forms a ternary complex with MCM helicase and DNA. Component of the archaeal exosome complex. Mg(2+) serves as cofactor.

The enzyme catalyses ssDNA + n NTP = ssDNA/pppN(pN)n-1 hybrid + (n-1) diphosphate.. Its function is as follows. RNA polymerase that catalyzes the synthesis of short RNA molecules used as primers for DNA polymerase during DNA replication. Also part of the exosome, which is a complex involved in RNA degradation. Acts as a poly(A)-binding protein that enhances the interaction between heteromeric, adenine-rich transcripts and the exosome. This chain is DNA primase DnaG, found in Methanosphaera stadtmanae (strain ATCC 43021 / DSM 3091 / JCM 11832 / MCB-3).